A 153-amino-acid polypeptide reads, in one-letter code: 3-hydroxyacyl-[acyl-carrier-protein] dehydratase FabZ (153 aa).

Residue H54 is part of the active site.

The protein belongs to the thioester dehydratase family. FabZ subfamily.

Its subcellular location is the cytoplasm. The catalysed reaction is a (3R)-hydroxyacyl-[ACP] = a (2E)-enoyl-[ACP] + H2O. In terms of biological role, involved in unsaturated fatty acids biosynthesis. Catalyzes the dehydration of short chain beta-hydroxyacyl-ACPs and long chain saturated and unsaturated beta-hydroxyacyl-ACPs. This chain is 3-hydroxyacyl-[acyl-carrier-protein] dehydratase FabZ, found in Shewanella loihica (strain ATCC BAA-1088 / PV-4).